The primary structure comprises 139 residues: Transcription antitermination protein NusB (139 aa).

The protein belongs to the NusB family.

Its function is as follows. Involved in transcription antitermination. Required for transcription of ribosomal RNA (rRNA) genes. Binds specifically to the boxA antiterminator sequence of the ribosomal RNA (rrn) operons. The protein is Transcription antitermination protein NusB of Limosilactobacillus fermentum (strain NBRC 3956 / LMG 18251) (Lactobacillus fermentum).